Here is a 119-residue protein sequence, read N- to C-terminus: RIIa domain-containing protein 1 (119 aa).

Residues 70 to 104 (KEVSLLISGFFREMFLKRPDNILEFAAHYFTDPRL) enclose the RIIa domain.

In terms of tissue distribution, abundant in tissues rich in highly ciliated cells, such as testis, trachea and olfactory epithelium.

The polypeptide is RIIa domain-containing protein 1 (Riiad1) (Mus musculus (Mouse)).